The primary structure comprises 402 residues: Uroporphyrinogen decarboxylase 1, chloroplastic (402 aa).

A chloroplast-targeting transit peptide spans 1–50 (MISATATAAFLAAAPASSSSCTTHRRRSGLPAISASLATASSTEEPLLVR). Substrate contacts are provided by residues 67–71 (RQAGR), F86, S116, D117, Y193, S248, and H363.

It belongs to the uroporphyrinogen decarboxylase family. As to quaternary structure, homodimer.

It localises to the plastid. The protein localises to the chloroplast. The enzyme catalyses uroporphyrinogen III + 4 H(+) = coproporphyrinogen III + 4 CO2. The protein operates within porphyrin-containing compound metabolism; protoporphyrin-IX biosynthesis; coproporphyrinogen-III from 5-aminolevulinate: step 4/4. In terms of biological role, catalyzes the decarboxylation of four acetate groups of uroporphyrinogen-III to yield coproporphyrinogen-III. This is Uroporphyrinogen decarboxylase 1, chloroplastic from Oryza sativa subsp. japonica (Rice).